The following is a 284-amino-acid chain: Tropomyosin (284 aa).

Positions 1–284 (MDGIKKKMIA…DQTFAELTGY (284 aa)) form a coiled coil. 2 stretches are compositionally biased toward basic and acidic residues: residues 29–42 (LKQK…KETE) and 111–136 (AKFD…RSIA). 2 disordered regions span residues 29–49 (LKQK…LNNR) and 111–149 (AKFD…DQQK).

Belongs to the tropomyosin family.

Functionally, tropomyosin, in association with the troponin complex, plays a central role in the calcium dependent regulation of muscle contraction. This is Tropomyosin from Clonorchis sinensis (Chinese liver fluke).